Here is a 378-residue protein sequence, read N- to C-terminus: Protein FAM185A (378 aa).

In Mus musculus (Mouse), this protein is Protein FAM185A (Fam185a).